The following is a 121-amino-acid chain: Small ribosomal subunit protein uS13 (121 aa).

The segment at H91–K121 is disordered. Residues A106–K121 show a composition bias toward basic residues.

Belongs to the universal ribosomal protein uS13 family. Part of the 30S ribosomal subunit. Forms a loose heterodimer with protein S19. Forms two bridges to the 50S subunit in the 70S ribosome.

Located at the top of the head of the 30S subunit, it contacts several helices of the 16S rRNA. In the 70S ribosome it contacts the 23S rRNA (bridge B1a) and protein L5 of the 50S subunit (bridge B1b), connecting the 2 subunits; these bridges are implicated in subunit movement. Contacts the tRNAs in the A and P-sites. In Bacillus cereus (strain ZK / E33L), this protein is Small ribosomal subunit protein uS13.